A 224-amino-acid chain; its full sequence is ATP synthase subunit b (224 aa).

A helical membrane pass occupies residues 2 to 22 (TPSLGLIFWQSVIFLISFIIL).

The protein belongs to the ATPase B chain family. In terms of assembly, F-type ATPases have 2 components, F(1) - the catalytic core - and F(0) - the membrane proton channel. F(1) has five subunits: alpha(3), beta(3), gamma(1), delta(1), epsilon(1). F(0) has three main subunits: a(1), b(2) and c(10-14). The alpha and beta chains form an alternating ring which encloses part of the gamma chain. F(1) is attached to F(0) by a central stalk formed by the gamma and epsilon chains, while a peripheral stalk is formed by the delta and b chains.

It localises to the cell membrane. Functionally, f(1)F(0) ATP synthase produces ATP from ADP in the presence of a proton or sodium gradient. F-type ATPases consist of two structural domains, F(1) containing the extramembraneous catalytic core and F(0) containing the membrane proton channel, linked together by a central stalk and a peripheral stalk. During catalysis, ATP synthesis in the catalytic domain of F(1) is coupled via a rotary mechanism of the central stalk subunits to proton translocation. Its function is as follows. Component of the F(0) channel, it forms part of the peripheral stalk, linking F(1) to F(0). In Karelsulcia muelleri (strain GWSS) (Sulcia muelleri), this protein is ATP synthase subunit b.